The primary structure comprises 522 residues: MSNRVIIFDTTLRDGEQALAASLSVKEKLQIAMALERLGVDVMEVGFPVSSPGDFESVQTIARTIKNSRVCALSRALEKDIDAAAQALSVADQFRIHTFISTSTIHVESKLKRSFDQVLEMAVGAVKYARRFTDDVEFSCEDAGRTPIDNLCRMVEAAILAGARTINIPDTVGYTVPSEFGNIIQTLFNRVPNIDQAVISVHCHDDLGLSVANSITAVQHGARQIECTINGIGERAGNCSLEEIAMILATRKGMLGLETGINAKEIHRTSNLVSQLCNMPVQANKAIVGANAFTHSSGIHQDGMLKAQNTYEIMTPESIGLNRNNLNMTSRSGRHVIKHRMEEMGYSEHDYNMDTLYEEFLKLADKKGQVFDYDLEALAFMEAQAEEDNHYQLQQLVVQSDSTEGVATATVRIEVGGEIKTEAATGNGPVDAAYNAIARATDRRIDIISYKLGAKGVGQNALGQVDITAVYHEQNFHGVGLATDVVEASARALVHVMNLTCRADKVADYKQSMQKNRELGGV.

The 263-residue stretch at 5–267 (VIIFDTTLRD…ETGINAKEIH (263 aa)) folds into the Pyruvate carboxyltransferase domain. Positions 14, 202, 204, and 238 each coordinate Mn(2+). Residues 392–522 (QLQQLVVQSD…MQKNRELGGV (131 aa)) are regulatory domain.

It belongs to the alpha-IPM synthase/homocitrate synthase family. LeuA type 1 subfamily. Homodimer. Requires Mn(2+) as cofactor.

The protein resides in the cytoplasm. It carries out the reaction 3-methyl-2-oxobutanoate + acetyl-CoA + H2O = (2S)-2-isopropylmalate + CoA + H(+). The protein operates within amino-acid biosynthesis; L-leucine biosynthesis; L-leucine from 3-methyl-2-oxobutanoate: step 1/4. In terms of biological role, catalyzes the condensation of the acetyl group of acetyl-CoA with 3-methyl-2-oxobutanoate (2-ketoisovalerate) to form 3-carboxy-3-hydroxy-4-methylpentanoate (2-isopropylmalate). This is 2-isopropylmalate synthase from Shewanella putrefaciens (strain CN-32 / ATCC BAA-453).